Here is a 657-residue protein sequence, read N- to C-terminus: MRGCLQSVKWLTSALRPSQSLASSTRYPRRLLSTSAPRNAQVRKPASEVEQRIAAIPIERFRNFCIVAHVDHGKSTLSDRLLELTGTIEAGANKQVLDKLDVERERGITVKAQTCSMLYNHQGEDYLLHLVDTPGHVDFRAEVSRSYASCGGALLLVDASQGIQAQTVANFYLAFAEGLKLVPVINKVDLPSADPQRALDQMKNTFELDPESAVLVSAKTGLNVSQLLPTVIEQIPAPVGDRTKPLRMLLVDSWYSTYKGVILLVRLFDGEIRAGDQVVSFATGLKYTVGEVGIMYPGRTAQSVLRAGQVGYIYFNPAMKRSQEAKVGDTYTKVGSERLVQPLPGFEEPKAMVFVAAYPVDASDFPHLEDSINQLILNDRSVTLQKESSEALGAGFRLGFLGTLHCSVFEDRLRQEHGASIIITPPTVPFKVIWKDGKEEIITNPALFPEEDTLRAKVTELQEPFVLATLTFPEEYLGRVIELCESNRGEQKSLEFFTSTQVILKYELPLAQLVDDFFGKLKGSTKGYASLDYEESGWRRSNISKLQLLVNKVPVDAVSRVVHSSQVQRLGRLWVSKFKEHVDRQMFEVVIQAAAGRNVVARESIKPFRKDVLQKLHAADVTRRKKLLEKQKEGRKKLKAVGNVVIEHKAFQAFLAK.

Residues 1-39 (MRGCLQSVKWLTSALRPSQSLASSTRYPRRLLSTSAPRN) constitute a mitochondrion transit peptide. The tr-type G domain maps to 59-239 (ERFRNFCIVA…TVIEQIPAPV (181 aa)). GTP contacts are provided by residues 121–128 (HQGEDYLL), 185–189 (INKVD), and 239–242 (VGDR).

The protein belongs to the TRAFAC class translation factor GTPase superfamily. Classic translation factor GTPase family. LepA subfamily.

It localises to the mitochondrion inner membrane. The catalysed reaction is GTP + H2O = GDP + phosphate + H(+). Its function is as follows. Promotes mitochondrial protein synthesis. May act as a fidelity factor of the translation reaction, by catalyzing a one-codon backward translocation of tRNAs on improperly translocated ribosomes. Binds to mitochondrial ribosomes in a GTP-dependent manner. This chain is Translation factor GUF1, mitochondrial, found in Ajellomyces capsulatus (strain H143) (Darling's disease fungus).